We begin with the raw amino-acid sequence, 943 residues long: Isoleucine--tRNA ligase (943 aa).

The short motif at 58-68 (PYANGTIHIGH) is the 'HIGH' region element. Glutamate 567 is an L-isoleucyl-5'-AMP binding site. Positions 608 to 612 (KMSKS) match the 'KMSKS' region motif. Lysine 611 provides a ligand contact to ATP. Positions 906, 909, 926, and 929 each coordinate Zn(2+).

This sequence belongs to the class-I aminoacyl-tRNA synthetase family. IleS type 1 subfamily. As to quaternary structure, monomer. Requires Zn(2+) as cofactor.

Its subcellular location is the cytoplasm. The enzyme catalyses tRNA(Ile) + L-isoleucine + ATP = L-isoleucyl-tRNA(Ile) + AMP + diphosphate. Functionally, catalyzes the attachment of isoleucine to tRNA(Ile). As IleRS can inadvertently accommodate and process structurally similar amino acids such as valine, to avoid such errors it has two additional distinct tRNA(Ile)-dependent editing activities. One activity is designated as 'pretransfer' editing and involves the hydrolysis of activated Val-AMP. The other activity is designated 'posttransfer' editing and involves deacylation of mischarged Val-tRNA(Ile). The sequence is that of Isoleucine--tRNA ligase from Pseudomonas syringae pv. tomato (strain ATCC BAA-871 / DC3000).